A 33-amino-acid polypeptide reads, in one-letter code: Gastrin (33 aa).

Pyrrolidone carboxylic acid is present on Gln1. Phenylalanine amide is present on Phe33.

This sequence belongs to the gastrin/cholecystokinin family.

It is found in the secreted. Its function is as follows. Gastrin stimulates the stomach mucosa to produce and secrete hydrochloric acid and the pancreas to secrete its digestive enzymes. It also stimulates smooth muscle contraction and increases blood circulation and water secretion in the stomach and intestine. This chain is Gastrin (GAST), found in Cavia porcellus (Guinea pig).